Here is a 554-residue protein sequence, read N- to C-terminus: Valerianol synthase TPS1C (554 aa).

Residues Asp307 and Asp311 each contribute to the Mg(2+) site. The short motif at Val326–Asp330 is the DDXXD motif element. Positions 452, 456, and 460 each coordinate Mg(2+).

The protein belongs to the terpene synthase family. Mg(2+) serves as cofactor.

It catalyses the reaction (2E,6E)-farnesyl diphosphate + H2O = valerianol + diphosphate. The protein operates within secondary metabolite biosynthesis; terpenoid biosynthesis. Its function is as follows. Terpene synthase that catalyzes the biosynthesis of the terpene valerianol, which is a volatile compound of floral scent. The chain is Valerianol synthase TPS1C from Camellia hiemalis (Camellia).